The chain runs to 146 residues: VHLTPEEKNAVTTLWGKVNVDEVGGEALGRLLVVYPWTQRFFDSFGDLSSPAAVMGNPKVKAHGKKVLGAFSDGLNHLDNLKGTFAQLSELHCDKLHVDPENFKLLGNVLVCVLAHHFGKEFTPQVQAAYQKVVAGVANALAHKYH.

V1 carries the N-acetylvaline modification. The Globin domain maps to 2-146 (HLTPEEKNAV…VANALAHKYH (145 aa)). Residue T12 is modified to Phosphothreonine. S44 is subject to Phosphoserine. Position 59 is an N6-acetyllysine (K59). Heme b is bound at residue H63. Residue K82 is modified to N6-acetyllysine. H92 serves as a coordination point for heme b. At C93 the chain carries S-nitrosocysteine. Position 144 is an N6-acetyllysine (K144).

It belongs to the globin family. Heterotetramer of two alpha chains and two beta chains. As to expression, red blood cells.

In terms of biological role, involved in oxygen transport from the lung to the various peripheral tissues. In Theropithecus gelada (Gelada baboon), this protein is Hemoglobin subunit beta (HBB).